We begin with the raw amino-acid sequence, 111 residues long: uncharacterized protein (111 aa).

It localises to the mitochondrion. This is an uncharacterized protein from Arabidopsis thaliana (Mouse-ear cress).